The following is a 449-amino-acid chain: Alginate biosynthesis transcriptional regulatory protein AlgB (449 aa).

In terms of domain architecture, Response regulatory spans 10-124 (RILLVDDESA…QLRLAAAKQL (115 aa)). Position 59 is a 4-aspartylphosphate (Asp59). The 230-residue stretch at 147–376 (LESHSPAMAA…LRNVIERASI (230 aa)) folds into the Sigma-54 factor interaction domain. ATP contacts are provided by residues 175–182 (GESGSGKG) and 238–247 (ADGGTLFLDE). A DNA-binding region (H-T-H motif) is located at residues 426–445 (LDQAAKTLGIDASTLYRKRK).

Phosphorylated by KinB.

It functions in the pathway glycan biosynthesis; alginate biosynthesis [regulation]. Its function is as follows. Member of the two-component regulatory system AlgB/KinB involved in regulation of alginate biosynthesis genes. Positive regulator of the alginate biosynthetic gene AlgD. In Pseudomonas aeruginosa (strain ATCC 15692 / DSM 22644 / CIP 104116 / JCM 14847 / LMG 12228 / 1C / PRS 101 / PAO1), this protein is Alginate biosynthesis transcriptional regulatory protein AlgB (algB).